Here is a 272-residue protein sequence, read N- to C-terminus: Cyclase-like protein 2 (272 aa).

Residues 1-17 (MAHLATVVLLLVAAARQ) form the signal peptide.

This sequence belongs to the Cyclase 1 superfamily. As to expression, highly expressed in leaf sheaths and flag leaves. Expressed in roots, stems, leaf collars, glumes, young panicles and pistils.

The protein localises to the secreted. It is found in the extracellular space. The protein resides in the extracellular matrix. In terms of biological role, may be involved in response to stresses. The sequence is that of Cyclase-like protein 2 from Oryza sativa subsp. japonica (Rice).